The chain runs to 499 residues: Putative antiporter subunit mnhD2 (499 aa).

Transmembrane regions (helical) follow at residues 1–21 (MSNL…ILVF), 31–51 (ILSI…LIYV), 77–97 (LSLL…AYGF), 107–127 (FHLP…FLTS), 129–149 (LFNL…LVTL), 160–180 (IVYV…IGML), 208–228 (ISLV…FMWL), 239–259 (LAAL…IRFF), 272–292 (TLLV…VIAY), 307–327 (IGFI…GAIF), 329–349 (LAND…LVYM), 367–387 (FFGV…PFSG), 402–422 (GNYI…YSLF), and 449–469 (GLLS…PVVL).

The protein belongs to the CPA3 antiporters (TC 2.A.63) subunit D family. May form a heterooligomeric complex that consists of seven subunits: mnhA2, mnhB2, mnhC2, mnhD2, mnhE2, mnhF2 and mnhG2.

The protein localises to the cell membrane. In Staphylococcus epidermidis (strain ATCC 35984 / DSM 28319 / BCRC 17069 / CCUG 31568 / BM 3577 / RP62A), this protein is Putative antiporter subunit mnhD2 (mnhD2).